A 249-amino-acid chain; its full sequence is MSRVSDTFAETSSVYSPDHADIYDAIHSARGRDWAAEAGEVVQLVRTRLPEAQSLLDVACGTGAHLERFRAEYAKVAGLELSDAMREIAIRRVPEVPIHIGDIRDFDLGEPFDVITCLCFTAAYMRTVDDLRRVTRNMARHLAPGGVAVIEPWWFPDKFIDGFVTGAVAHHGERVISRLSHSVLEGRTSRMTVRYTVAEPTGIRDFTEFEILSLFTEDEYTAALEDAGIRAEYLPGAPNGRGLFVGIRN.

A substrate-binding site is contributed by R30. S-adenosyl-L-methionine is bound by residues A59, E80, and D102–I103. Substrate contacts are provided by residues T165, R178 to S182, and R241.

The protein belongs to the methyltransferase TylM1/DesVI family. As to quaternary structure, homodimer. Mg(2+) serves as cofactor.

The enzyme catalyses dTDP-4-amino-2,3,4,6-tetradeoxy-alpha-D-erythro-hexopyranose + 2 S-adenosyl-L-methionine = dTDP-alpha-D-forosamine + 2 S-adenosyl-L-homocysteine + 2 H(+). Involved in the biosynthesis of forosamine ((4-dimethylamino)-2,3,4,6-tetradeoxy-alpha-D-threo-hexopyranose), a highly deoxygenated sugar component of several bioactive natural products such as the insecticidal spinosyns A and D. Catalyzes the dimethylation of the C-4 amino group from dTDP-4-amino-2,3,4,6-tetradeoxy-alpha-D-glucose to yield dTDP-D-forosamine. The protein is dTDP-4-amino-2,3,4,6-tetradeoxy-D-glucose N,N-dimethyltransferase of Saccharopolyspora spinosa.